Consider the following 211-residue polypeptide: tRNA (guanine-N(7)-)-methyltransferase (211 aa).

Residues glutamate 44, aspartate 69, aspartate 96, and aspartate 118 each contribute to the S-adenosyl-L-methionine site. The active site involves aspartate 118. Position 122 (lysine 122) interacts with substrate. The tract at residues 124–129 is interaction with RNA; that stretch reads KHEKRR. Residues aspartate 154 and 191–194 each bind substrate; that span reads TEYE.

Belongs to the class I-like SAM-binding methyltransferase superfamily. TrmB family.

The enzyme catalyses guanosine(46) in tRNA + S-adenosyl-L-methionine = N(7)-methylguanosine(46) in tRNA + S-adenosyl-L-homocysteine. The protein operates within tRNA modification; N(7)-methylguanine-tRNA biosynthesis. Its function is as follows. Catalyzes the formation of N(7)-methylguanine at position 46 (m7G46) in tRNA. In Streptococcus pyogenes serotype M12 (strain MGAS2096), this protein is tRNA (guanine-N(7)-)-methyltransferase.